The chain runs to 1914 residues: Myosin light chain kinase, smooth muscle (1914 aa).

G2 bears the N-acetylalanine mark. Ig-like C2-type domains lie at 33-122 and 161-249; these read PAFI…VELT and PKFA…AELS. C182 and C233 are joined by a disulfide. At Y231 the chain carries Phosphotyrosine; by ABL1. A disordered region spans residues 286 to 393; sequence DSLEAAAKSK…TRQPGLGSQD (108 aa). A Phosphoserine modification is found at S305. Residues 318-329 show a composition bias toward basic and acidic residues; sequence RESKLESCKDSP. Positions 331-347 are enriched in polar residues; sequence TAPQTPVLQKTSSSITL. Phosphoserine is present on residues S343 and S365. Ig-like C2-type domains lie at 414 to 503 and 514 to 599; these read PKFE…WTLQ and PSFS…AWVT. 2 disulfide bridges follow: C435–C487 and C535–C583. Y464 is subject to Phosphotyrosine; by ABL1 and SRC. Phosphotyrosine; by SRC is present on Y471. Y556 carries the phosphotyrosine; by ABL1 modification. N6-acetyllysine is present on K608. Position 611 is a phosphotyrosine; by ABL1 (Y611). Ig-like C2-type domains follow at residues 620-711 and 721-821; these read PTAP…AVLT and PWFI…ALPR. C742 and C805 are joined by a disulfide. 2 positions are modified to phosphotyrosine; by ABL1: Y792 and Y846. 4 repeat units span residues 868–895, 896–923, 924–951, and 952–979. Residues 868–998 form a 5 X 28 AA approximate tandem repeats region; sequence DVRGVLKRRV…KKLPAENGSS (131 aa). Residues 923–963 form an actin-binding (calcium/calmodulin-sensitive) region; sequence MDFRANLQRQVKPKTVSEEERKVHSPQQVDFRSVLAKKGTS. The segment at 932–1098 is disordered; the sequence is QVKPKTVSEE…KRSESQGTAP (167 aa). S947 is modified (phosphoserine). Positions 948–963 are calmodulin-binding; that stretch reads PQQVDFRSVLAKKGTS. A 1-5; truncated repeat occupies 980 to 998; sequence DFRSVLGGKKKLPAENGSS. A 2-1; truncated repeat occupies 999-1003; the sequence is SAETL. Positions 999–1063 are 6 X 12 AA approximate tandem repeats; that stretch reads SAETLNAKAV…KPDENLKSAS (65 aa). Tandem repeats lie at residues 1004–1015, 1016–1027, 1028–1039, 1040–1051, and 1052–1063. Over residues 1054–1077 the composition is skewed to basic and acidic residues; the sequence is KPDENLKSASKEELKKDVKNDVNC. The actin-binding (calcium/calmodulin-insensitive) stretch occupies residues 1061-1460; sequence SASKEELKKD…TVTINTEQKV (400 aa). Residues 1098 to 1186 enclose the Ig-like C2-type 7 domain; sequence PAFKQKLQDV…GQAECSCQVT (89 aa). C1119 and C1170 are disulfide-bonded. The interval 1192–1237 is disordered; that stretch reads ASENTKAPEMKSRRPKSSLPPVLGTESDATVKKKPAPKTPPKAAMP. One can recognise an Ig-like C2-type 8 domain in the interval 1238–1326; it reads PQIIQFPEDQ…GSRQAQVNLT (89 aa). One can recognise a Fibronectin type-III domain in the interval 1334-1426; it reads PAGTPCASDI…QESELTTVGE (93 aa). The span at 1413–1422 shows a compositional bias: polar residues; it reads SEPSQESELT. The interval 1413-1446 is disordered; sequence SEPSQESELTTVGEKPEEPKDEVEVSDDDEKEPE. The span at 1431 to 1445 shows a compositional bias: acidic residues; sequence PKDEVEVSDDDEKEP. The residue at position 1438 (S1438) is a Phosphoserine. Y1449 is modified (phosphotyrosine; by ABL1). Residues 1464–1719 form the Protein kinase domain; sequence YDIEERLGSG…CTQCLQHPWL (256 aa). ATP is bound by residues 1470-1478 and K1493; that span reads LGSGKFGQV. At Y1575 the chain carries Phosphotyrosine; by ABL1. The active-site Proton acceptor is D1585. The residue at position 1635 (Y1635) is a Phosphotyrosine; by ABL1. Residues 1711 to 1774 are calmodulin-binding; the sequence is TQCLQHPWLM…SGLSGRKSST (64 aa). Phosphoserine occurs at positions 1759, 1760, 1772, 1773, and 1776. Positions 1767 to 1787 are disordered; the sequence is LSGRKSSTGSPTSPLNAEKLE. The segment covering 1770–1781 has biased composition (polar residues); the sequence is RKSSTGSPTSPL. At T1778 the chain carries Phosphothreonine. The residue at position 1779 (S1779) is a Phosphoserine. The Ig-like C2-type 9 domain occupies 1809–1898; sequence PYFSKTIRDL…GEATCTAELI (90 aa). Cysteines 1830 and 1882 form a disulfide.

It belongs to the protein kinase superfamily. CAMK Ser/Thr protein kinase family. As to quaternary structure, all isoforms including Telokin bind calmodulin. Interacts with SVIL. Interacts with CTTN; this interaction is reduced during thrombin-induced endothelial cell (EC) contraction but is promoted by the barrier-protective agonist sphingosine 1-phosphate (S1P) within lamellipodia. A complex made of ABL1, CTTN and MYLK regulates cortical actin-based cytoskeletal rearrangement critical to sphingosine 1-phosphate (S1P)-mediated endothelial cell (EC) barrier enhancement. Binds to NAA10/ARD1 and PTK2B/PYK2. Mg(2+) is required as a cofactor. The cofactor is Ca(2+). Can probably be down-regulated by phosphorylation. Tyrosine phosphorylation by ABL1 increases kinase activity, reverses MLCK-mediated inhibition of Arp2/3-mediated actin polymerization, and enhances CTTN-binding. Phosphorylation by SRC at Tyr-464 and Tyr-471 promotes CTTN binding. In terms of processing, the C-terminus is deglutamylated by AGTPBP1/CCP1, AGBL1/CCP4 and AGBL4/CCP6, leading to the formation of Myosin light chain kinase, smooth muscle, deglutamylated form. The consequences of C-terminal deglutamylation are unknown. Post-translationally, acetylated at Lys-608 by NAA10/ARD1 via a calcium-dependent signaling; this acetylation represses kinase activity and reduces tumor cell migration. In terms of tissue distribution, smooth muscle and non-muscle isozymes are expressed in a wide variety of adult and fetal tissues and in cultured endothelium with qualitative expression appearing to be neither tissue- nor development-specific. Non-muscle isoform 2 is the dominant splice variant expressed in various tissues. Telokin has been found in a wide variety of adult and fetal tissues. Accumulates in well differentiated enterocytes of the intestinal epithelium in response to tumor necrosis factor (TNF).

It is found in the cytoplasm. The protein resides in the cell projection. It localises to the lamellipodium. The protein localises to the cleavage furrow. Its subcellular location is the cytoskeleton. It is found in the stress fiber. It catalyses the reaction L-seryl-[myosin light chain] + ATP = O-phospho-L-seryl-[myosin light chain] + ADP + H(+). It carries out the reaction L-threonyl-[myosin light chain] + ATP = O-phospho-L-threonyl-[myosin light chain] + ADP + H(+). Isoform 1 is activated by phosphorylation on Tyr-464 and Tyr-471. Isoforms which lack these tyrosine residues are not regulated in this way. All catalytically active isoforms require binding to calcium and calmodulin for activation. Repressed by organometallic pyridylnaphthalimide complexes, wortmannin, ML-7 (a synthetic naphthalenesulphonyl derivative that inhibits the binding of ATP to MLCK) and ML-9. Functionally, calcium/calmodulin-dependent myosin light chain kinase implicated in smooth muscle contraction via phosphorylation of myosin light chains (MLC). Also regulates actin-myosin interaction through a non-kinase activity. Phosphorylates PTK2B/PYK2 and myosin light-chains. Involved in the inflammatory response (e.g. apoptosis, vascular permeability, leukocyte diapedesis), cell motility and morphology, airway hyperreactivity and other activities relevant to asthma. Required for tonic airway smooth muscle contraction that is necessary for physiological and asthmatic airway resistance. Necessary for gastrointestinal motility. Implicated in the regulation of endothelial as well as vascular permeability, probably via the regulation of cytoskeletal rearrangements. In the nervous system it has been shown to control the growth initiation of astrocytic processes in culture and to participate in transmitter release at synapses formed between cultured sympathetic ganglion cells. Critical participant in signaling sequences that result in fibroblast apoptosis. Plays a role in the regulation of epithelial cell survival. Required for epithelial wound healing, especially during actomyosin ring contraction during purse-string wound closure. Mediates RhoA-dependent membrane blebbing. Triggers TRPC5 channel activity in a calcium-dependent signaling, by inducing its subcellular localization at the plasma membrane. Promotes cell migration (including tumor cells) and tumor metastasis. PTK2B/PYK2 activation by phosphorylation mediates ITGB2 activation and is thus essential to trigger neutrophil transmigration during acute lung injury (ALI). May regulate optic nerve head astrocyte migration. Probably involved in mitotic cytoskeletal regulation. Regulates tight junction probably by modulating ZO-1 exchange in the perijunctional actomyosin ring. Mediates burn-induced microvascular barrier injury; triggers endothelial contraction in the development of microvascular hyperpermeability by phosphorylating MLC. Essential for intestinal barrier dysfunction. Mediates Giardia spp.-mediated reduced epithelial barrier function during giardiasis intestinal infection via reorganization of cytoskeletal F-actin and tight junctional ZO-1. Necessary for hypotonicity-induced Ca(2+) entry and subsequent activation of volume-sensitive organic osmolyte/anion channels (VSOAC) in cervical cancer cells. Responsible for high proliferative ability of breast cancer cells through anti-apoptosis. The polypeptide is Myosin light chain kinase, smooth muscle (Homo sapiens (Human)).